We begin with the raw amino-acid sequence, 671 residues long: Gametogenetin-binding protein 2-like (671 aa).

Disordered stretches follow at residues 372-489 (REQK…ARVQ) and 532-562 (VRDS…SEVS). Over residues 373-384 (EQKKLKKKKKKD) the composition is skewed to basic residues. Positions 385-395 (EKKNLLHRQCD) are enriched in basic and acidic residues. The span at 396-420 (DTEANESDEEEEELRNEELDLEEES) shows a compositional bias: acidic residues. The span at 455 to 472 (TKSKPKKQSKKKKQKKAA) shows a compositional bias: basic residues. Polar residues-rich tracts occupy residues 476-486 (MGNQKQMQATA) and 546-557 (GSRTSSAISSPE).

This chain is Gametogenetin-binding protein 2-like, found in Drosophila melanogaster (Fruit fly).